The following is a 183-amino-acid chain: Ferritin heavy chain (183 aa).

Met-1 is subject to N-acetylmethionine. N-acetylthreonine; in Ferritin heavy chain, N-terminally processed is present on Thr-2. The Ferritin-like diiron domain maps to Gln-11–Gly-160. Positions 28, 63, 66, 108, and 142 each coordinate Fe cation. 2 positions are modified to phosphoserine: Ser-179 and Ser-183.

Belongs to the ferritin family. As to quaternary structure, oligomer of 24 subunits. There are two types of subunits: L (light) chain and H (heavy) chain. The major chain can be light or heavy, depending on the species and tissue type. The functional molecule forms a roughly spherical shell with a diameter of 12 nm and contains a central cavity into which the insoluble mineral iron core is deposited. Interacts with NCOA4; NCOA4 promotes targeting of the iron-binding ferritin complex to autolysosomes following starvation or iron depletion.

Its subcellular location is the cytoplasm. The protein localises to the lysosome. The protein resides in the cytoplasmic vesicle. It is found in the autophagosome. It catalyses the reaction 4 Fe(2+) + O2 + 4 H(+) = 4 Fe(3+) + 2 H2O. In terms of biological role, stores iron in a soluble, non-toxic, readily available form. Important for iron homeostasis. Has ferroxidase activity. Iron is taken up in the ferrous form and deposited as ferric hydroxides after oxidation. Also plays a role in delivery of iron to cells. Mediates iron uptake in capsule cells of the developing kidney. Delivery to lysosomes is mediated by the cargo receptor NCOA4 for autophagic degradation and release of iron. The sequence is that of Ferritin heavy chain (FTH1) from Pongo abelii (Sumatran orangutan).